Here is a 154-residue protein sequence, read N- to C-terminus: Low molecular weight protein-tyrosine-phosphatase PtpA (154 aa).

C8 acts as the Nucleophile in catalysis. Residue R14 is part of the active site. D120 (proton donor) is an active-site residue.

This sequence belongs to the low molecular weight phosphotyrosine protein phosphatase family.

It carries out the reaction O-phospho-L-tyrosyl-[protein] + H2O = L-tyrosyl-[protein] + phosphate. In terms of biological role, dephosphorylates the phosphotyrosine-containing proteins. The polypeptide is Low molecular weight protein-tyrosine-phosphatase PtpA (ptpA) (Staphylococcus saprophyticus subsp. saprophyticus (strain ATCC 15305 / DSM 20229 / NCIMB 8711 / NCTC 7292 / S-41)).